The chain runs to 274 residues: Major capsid protein (274 aa).

The protein localises to the virion. In terms of biological role, assembles to form an icosahedral capsid. This chain is Major capsid protein, found in Staphylococcus phage phiMR11.